The primary structure comprises 445 residues: Alpha/beta hydrolase psoB (445 aa).

Residue serine 246 is the Nucleophile of the active site.

It belongs to the AB hydrolase superfamily. FUS2 hydrolase family. In terms of assembly, homodimer.

The protein operates within secondary metabolite biosynthesis. Its function is as follows. Alpha/beta hydrolase; part of the gene cluster that mediates the biosynthesis of pseurotin A, a competitive inhibitor of chitin synthase and an inducer of nerve-cell proliferation. The PKS-NRPS hybrid synthetase psoA is responsible for the biosynthesis of azaspirene, one of the first intermediates having the 1-oxa-7-azaspiro[4,4]-non-2-ene-4,6-dione core of pseurotin, via condensation of one acetyl-CoA, 4 malonyl-CoA, and a L-phenylalanine molecule. The dual-functional monooxygenase/methyltransferase psoF seems to be involved in the addition of the C3 methyl group onto the pseurotin scaffold. Azaspirene is then converted to synerazol through 4 steps including oxidation of C17 by the cytochrome P450 monooxygenase psoD, O-methylation of the hydroxy group of C8 by the methyltransferase psoC, and the trans-to-cis isomerization of the C13 olefin by the glutathione S-transferase psoE. The fourth step of synerazol production is performed by the dual-functional monooxygenase/methyltransferase psoF which seems to catalyze the epoxidation of the intermediate deepoxy-synerazol. Synerazol can be attacked by a water molecule nonenzymatically at two different positions to yield two diol products, pseurotin A and pseurotin D. The sequence is that of Alpha/beta hydrolase psoB from Aspergillus fumigatus (strain ATCC MYA-4609 / CBS 101355 / FGSC A1100 / Af293) (Neosartorya fumigata).